The following is a 170-amino-acid chain: Adenine phosphoribosyltransferase (170 aa).

The protein belongs to the purine/pyrimidine phosphoribosyltransferase family. As to quaternary structure, homodimer.

It is found in the cytoplasm. It catalyses the reaction AMP + diphosphate = 5-phospho-alpha-D-ribose 1-diphosphate + adenine. It participates in purine metabolism; AMP biosynthesis via salvage pathway; AMP from adenine: step 1/1. In terms of biological role, catalyzes a salvage reaction resulting in the formation of AMP, that is energically less costly than de novo synthesis. This chain is Adenine phosphoribosyltransferase, found in Thermotoga neapolitana (strain ATCC 49049 / DSM 4359 / NBRC 107923 / NS-E).